The following is a 224-amino-acid chain: Ribose-5-phosphate isomerase A (224 aa).

Residues 32 to 35 (TGST), 85 to 88 (DGAD), and 98 to 101 (KGGG) contribute to the substrate site. Glu-107 (proton acceptor) is an active-site residue. Substrate is bound at residue Lys-125.

Belongs to the ribose 5-phosphate isomerase family. In terms of assembly, homodimer.

It carries out the reaction aldehydo-D-ribose 5-phosphate = D-ribulose 5-phosphate. Its pathway is carbohydrate degradation; pentose phosphate pathway; D-ribose 5-phosphate from D-ribulose 5-phosphate (non-oxidative stage): step 1/1. Functionally, catalyzes the reversible conversion of ribose-5-phosphate to ribulose 5-phosphate. In Pseudomonas fluorescens (strain Pf0-1), this protein is Ribose-5-phosphate isomerase A.